A 381-amino-acid polypeptide reads, in one-letter code: S-adenosylmethionine synthase (381 aa).

H15 is an ATP binding site. D17 contacts Mg(2+). E43 provides a ligand contact to K(+). Positions 56 and 99 each coordinate L-methionine. Positions 99-109 (QSLDIAQGVDN) are flexible loop. Residues 164–166 (DGK), 230–231 (RF), D239, 245–246 (RK), and K266 contribute to the ATP site. D239 lines the L-methionine pocket. K270 serves as a coordination point for L-methionine.

It belongs to the AdoMet synthase family. Homotetramer; dimer of dimers. It depends on Mg(2+) as a cofactor. K(+) serves as cofactor.

It localises to the cytoplasm. It carries out the reaction L-methionine + ATP + H2O = S-adenosyl-L-methionine + phosphate + diphosphate. Its pathway is amino-acid biosynthesis; S-adenosyl-L-methionine biosynthesis; S-adenosyl-L-methionine from L-methionine: step 1/1. Functionally, catalyzes the formation of S-adenosylmethionine (AdoMet) from methionine and ATP. The overall synthetic reaction is composed of two sequential steps, AdoMet formation and the subsequent tripolyphosphate hydrolysis which occurs prior to release of AdoMet from the enzyme. In Legionella jeonii, this protein is S-adenosylmethionine synthase.